Consider the following 283-residue polypeptide: Arylamine N-acetyltransferase (283 aa).

Cys70 acts as the Acyl-thioester intermediate in catalysis. Catalysis depends on residues His110 and Asp127.

Belongs to the arylamine N-acetyltransferase family. Homodimer and homotetramer.

The enzyme catalyses an arylamine + acetyl-CoA = an N-acetylarylamine + CoA. Its function is as follows. Catalyzes the transfer of the acetyl group from acetyl coenzyme A to the free amino group of arylamines and hydrazines. Is able to utilize not only acetyl-CoA, but also n-propionyl-CoA and acetoacetyl-CoA as acyl donors, although at a lower rate. As acetyl-CoA and propionyl-CoA are products of cholesterol catabolism and the nat gene is likely present in the same operon than genes involved in cholesterol degradation, this enzyme could have a role in the utilization and regulation of these CoA species. This is Arylamine N-acetyltransferase (nat) from Mycobacterium bovis (strain ATCC BAA-935 / AF2122/97).